The sequence spans 110 residues: Chorion class B protein M2410 (110 aa).

A run of 4 repeats spans residues 1 to 4 (YGGL), 5 to 9 (GYGGL), 10 to 14 (GYGGL), and 15 to 19 (GYGGL). The segment at 1 to 19 (YGGLGYGGLGYGGLGYGGL) is 4 X 5 AA tandem repeats of G-Y-G-G-L. The interval 1–27 (YGGLGYGGLGYGGLGYGGLGGGCGRGF) is left arm. Residues 28–96 (SGGGLPVATA…GNGDVGITRE (69 aa)) form a central domain region. Residues 97–110 (GGLGYGAGYGGGYG) form a right arm (Gly-rich tandem repeats) region.

This sequence belongs to the chorion protein family.

In terms of biological role, this protein is one of many from the eggshell of the silk moth. This chain is Chorion class B protein M2410, found in Bombyx mori (Silk moth).